The chain runs to 140 residues: Large ribosomal subunit protein bL17 (140 aa).

It belongs to the bacterial ribosomal protein bL17 family. As to quaternary structure, part of the 50S ribosomal subunit. Contacts protein L32.

The chain is Large ribosomal subunit protein bL17 from Methylobacterium nodulans (strain LMG 21967 / CNCM I-2342 / ORS 2060).